Reading from the N-terminus, the 156-residue chain is MEPAAGSSMEPSADWLATAAARGRVEEVRALLEAGALPNAPNSYGRRPIQVMMMGSARVAELLLLHGAEPNCADPATLTRPVHDAAREGFLDTLVVLHRAGARLDVRDAWGRLPVDLAEELGHRDVARYLRAAAGGTRGSNHARIDAAEGPSDIPD.

M1 is subject to N-acetylmethionine. S7 and S8 each carry phosphoserine. 4 ANK repeats span residues P11–A40, Y44–C72, T77–V106, and W110–G139. Phosphoserine occurs at positions 140 and 152.

Belongs to the CDKN2 cyclin-dependent kinase inhibitor family. As to quaternary structure, heterodimer with CDK4 or CDK6. Predominant p16 complexes contained CDK6. Interacts with CDK4 (both 'T-172'-phosphorylated and non-phosphorylated forms); the interaction inhibits cyclin D-CDK4 kinase activity. Interacts with ISCO2. In terms of processing, phosphorylation seems to increase interaction with CDK4. As to expression, widely expressed but not detected in brain or skeletal muscle. Isoform 3 is pancreas-specific.

It localises to the cytoplasm. The protein localises to the nucleus. Acts as a negative regulator of the proliferation of normal cells by interacting strongly with CDK4 and CDK6. This inhibits their ability to interact with cyclins D and to phosphorylate the retinoblastoma protein. This chain is Cyclin-dependent kinase inhibitor 2A, found in Homo sapiens (Human).